A 125-amino-acid chain; its full sequence is Small ribosomal subunit protein eS8 (125 aa).

Belongs to the eukaryotic ribosomal protein eS8 family. In terms of assembly, part of the 30S ribosomal subunit.

The polypeptide is Small ribosomal subunit protein eS8 (Methanosphaerula palustris (strain ATCC BAA-1556 / DSM 19958 / E1-9c)).